Consider the following 342-residue polypeptide: Putative gluconeogenesis factor (342 aa).

The tract at residues 318–342 (SEPPVAATQEIPIDGGRPRGDDAWR) is disordered. Residue Thr325 is modified to Phosphothreonine. A compositionally biased stretch (basic and acidic residues) spans 333-342 (GRPRGDDAWR).

The protein belongs to the gluconeogenesis factor family. In terms of processing, phosphorylated by PknA and/or PknB.

It is found in the cytoplasm. In terms of biological role, required for morphogenesis under gluconeogenic growth conditions. This is Putative gluconeogenesis factor from Mycobacterium tuberculosis (strain CDC 1551 / Oshkosh).